We begin with the raw amino-acid sequence, 380 residues long: MAAAAAAPGGGGGEPRGTAGVVPVVPGEVEVVKGQPFDVGPRYTQLQYIGEGAYGMVSSAYDHVRKTRVAIKKISPFEHQTYCQRTLREIQILLRFRHENVIGIRDILRAPTLEAMRDVYIVQDLMETDLYKLLKSQQLSNDHICYFLYQILRGLKYIHSANVLHRDLKPSNLLINTTCDLKICDFGLARIADPEHDHTGFLTEYVATRWYRAPEIMLNSKGYTKSIDIWSVGCILAEMLSNRPIFPGKHYLDQLNHILGILGSPSQEDLNCIINMKARNYLQSLPSKTKVAWAKLFPKSDSKALDLLDRMLTFNPNKRITVEEALAHPYLEQYYDPTDEPVAEEPFTFDMELDDLPKERLKELIFQETARFQPGAPEGP.

Residue alanine 2 is modified to N-acetylalanine. Positions 43 to 331 (YTQLQYIGEG…VEEALAHPYL (289 aa)) constitute a Protein kinase domain. Residues 49–57 (IGEGAYGMV) and lysine 72 each bind ATP. The active-site Proton acceptor is aspartate 167. The residue at position 199 (threonine 199) is a Phosphothreonine. A Phosphothreonine; by MAP2K1 and MAP2K2 modification is found at threonine 203. The TXY signature appears at 203–205 (TEY). Tyrosine 205 is subject to Phosphotyrosine; by MAP2K1 and MAP2K2. Threonine 208 is subject to Phosphothreonine; by autocatalysis.

It belongs to the protein kinase superfamily. CMGC Ser/Thr protein kinase family. MAP kinase subfamily. Binds both upstream activators and downstream substrates in multimolecular complexes. Found in a complex with at least BRAF, HRAS, MAP2K1/MEK1, MAPK3 and RGS14. Interacts with TPR. Interacts with ADAM15, ARRB2, CANX, DAPK1 (via death domain), HSF4, IER3, MAP2K1/MEK1, NISCH, and SGK1. Interacts with MORG1. Interacts with PEA15. Interacts with isoform 1 of MKNK2 and this binding prevents from dephosphorylation and inactivation. Interacts with CDKN2AIP. Interacts with HSF1 (via D domain and preferentially with hyperphosphorylated form); this interaction occurs upon heat shock. Interacts with CAVIN4. Interacts with GIT1; this interaction is necessary for MAPK3 localization to focal adhesions. Interacts with ZNF263. Interacts with EBF4. It depends on Mg(2+) as a cofactor. Dually phosphorylated on Thr-203 and Tyr-205, which activates the enzyme. Ligand-activated ALK induces tyrosine phosphorylation. Dephosphorylated by PTPRJ at Tyr-205. Autophosphorylated on threonine and tyrosine residues in vitro. Phosphorylated upon FLT3 and KIT signaling. In terms of processing, ubiquitinated by TRIM15 via 'Lys-63'-linked ubiquitination; leading to activation. Deubiquitinated by CYLD.

The protein localises to the cytoplasm. It localises to the nucleus. Its subcellular location is the membrane. The protein resides in the caveola. It is found in the cell junction. The protein localises to the focal adhesion. It carries out the reaction L-seryl-[protein] + ATP = O-phospho-L-seryl-[protein] + ADP + H(+). The catalysed reaction is L-threonyl-[protein] + ATP = O-phospho-L-threonyl-[protein] + ADP + H(+). Its activity is regulated as follows. Phosphorylated by MAP2K1/MEK1 and MAP2K2/MEK2 on Thr-203 and Tyr-205 in response to external stimuli like insulin or NGF. Both phosphorylations are required for activity. This phosphorylation causes dramatic conformational changes, which enable full activation and interaction of MAPK1/ERK2 with its substrates. Dephosphorylated and inactivated by DUSP3, DUSP6 and DUSP9. In terms of biological role, serine/threonine kinase which acts as an essential component of the MAP kinase signal transduction pathway. MAPK1/ERK2 and MAPK3/ERK1 are the 2 MAPKs which play an important role in the MAPK/ERK cascade. They participate also in a signaling cascade initiated by activated KIT and KITLG/SCF. Depending on the cellular context, the MAPK/ERK cascade mediates diverse biological functions such as cell growth, adhesion, survival and differentiation through the regulation of transcription, translation, cytoskeletal rearrangements. The MAPK/ERK cascade also plays a role in initiation and regulation of meiosis, mitosis, and postmitotic functions in differentiated cells by phosphorylating a number of transcription factors. About 160 substrates have already been discovered for ERKs. Many of these substrates are localized in the nucleus, and seem to participate in the regulation of transcription upon stimulation. However, other substrates are found in the cytosol as well as in other cellular organelles, and those are responsible for processes such as translation, mitosis and apoptosis. Moreover, the MAPK/ERK cascade is also involved in the regulation of the endosomal dynamics, including lysosome processing and endosome cycling through the perinuclear recycling compartment (PNRC); as well as in the fragmentation of the Golgi apparatus during mitosis. The substrates include transcription factors (such as ATF2, BCL6, ELK1, ERF, FOS, HSF4 or SPZ1), cytoskeletal elements (such as CANX, CTTN, GJA1, MAP2, MAPT, PXN, SORBS3 or STMN1), regulators of apoptosis (such as BAD, BTG2, CASP9, DAPK1, IER3, MCL1 or PPARG), regulators of translation (such as EIF4EBP1) and a variety of other signaling-related molecules (like ARHGEF2, DEPTOR, FRS2 or GRB10). Protein kinases (such as RAF1, RPS6KA1/RSK1, RPS6KA3/RSK2, RPS6KA2/RSK3, RPS6KA6/RSK4, SYK, MKNK1/MNK1, MKNK2/MNK2, RPS6KA5/MSK1, RPS6KA4/MSK2, MAPKAPK3 or MAPKAPK5) and phosphatases (such as DUSP1, DUSP4, DUSP6 or DUSP16) are other substrates which enable the propagation the MAPK/ERK signal to additional cytosolic and nuclear targets, thereby extending the specificity of the cascade. The sequence is that of Mitogen-activated protein kinase 3 (Mapk3) from Mus musculus (Mouse).